An 892-amino-acid chain; its full sequence is von Willebrand factor A domain-containing protein 7 (892 aa).

Residues 1 to 27 (MLPVEVPLSQLGPPVLLLQLLLPPTSA) form the signal peptide. Residue Asn-54 is glycosylated (N-linked (GlcNAc...) asparagine). A disordered region spans residues 231-272 (YFGTNPPKPPGKCSHGGRFDQSSSQPPRGGINKDSTSPSFSP). Residues 313–495 (ASSLSFVLDT…HIRDVAAVVG (183 aa)) form the VWFA domain.

Its subcellular location is the secreted. This Rattus norvegicus (Rat) protein is von Willebrand factor A domain-containing protein 7 (Vwa7).